The following is a 337-amino-acid chain: Beta-ketoacyl-[acyl-carrier-protein] synthase III (337 aa).

Residues cysteine 119 and histidine 260 contribute to the active site. Residues 261-265 (QANQR) form an ACP-binding region. Residue asparagine 290 is part of the active site.

It belongs to the thiolase-like superfamily. FabH family. As to quaternary structure, homodimer.

Its subcellular location is the cytoplasm. The catalysed reaction is malonyl-[ACP] + acetyl-CoA + H(+) = 3-oxobutanoyl-[ACP] + CO2 + CoA. It functions in the pathway lipid metabolism; fatty acid biosynthesis. Its function is as follows. Catalyzes the condensation reaction of fatty acid synthesis by the addition to an acyl acceptor of two carbons from malonyl-ACP. Catalyzes the first condensation reaction which initiates fatty acid synthesis and may therefore play a role in governing the total rate of fatty acid production. Possesses both acetoacetyl-ACP synthase and acetyl transacylase activities. Its substrate specificity determines the biosynthesis of branched-chain and/or straight-chain of fatty acids. The protein is Beta-ketoacyl-[acyl-carrier-protein] synthase III of Synechococcus sp. (strain WH7803).